We begin with the raw amino-acid sequence, 271 residues long: tRNA pseudouridine synthase A (271 aa).

Asp52 acts as the Nucleophile in catalysis. A substrate-binding site is contributed by Tyr110.

Belongs to the tRNA pseudouridine synthase TruA family. Homodimer.

The catalysed reaction is uridine(38/39/40) in tRNA = pseudouridine(38/39/40) in tRNA. Functionally, formation of pseudouridine at positions 38, 39 and 40 in the anticodon stem and loop of transfer RNAs. The chain is tRNA pseudouridine synthase A from Burkholderia mallei (strain NCTC 10247).